The primary structure comprises 420 residues: Dynein axonemal assembly factor 4 (420 aa).

In terms of domain architecture, CS spans 3–87 (LQVSDYSWQQ…KEAAMWETLS (85 aa)). The tract at residues 7-103 (DYSWQQTKTA…EMMQRIREKS (97 aa)) is mediates interaction with ESR1 and STUB1. TPR repeat units lie at residues 290 to 323 (PEWLKDKGNKLFATENYLAAINAYNLAIRLNNKM), 324 to 357 (PLLYLNRAACHLKLKNLHKAIEDSSKALELLMPP), and 366 to 399 (MKAHVRRGTAFCQLELYVEGLQDYEAALKIDPSN).

Interacts with ZMYND10. Interacts with STUB1. Interacts with ESR1 and ESR2. Interacts with DNAAF2. Interacts with CCT3, CCT4, CCT5 and CCT8. Interacts with DNAAF6/PIH1D3.

The protein resides in the nucleus. Its subcellular location is the cytoplasm. It is found in the cell projection. The protein localises to the neuron projection. It localises to the dynein axonemal particle. In terms of biological role, involved in neuronal migration during development of the cerebral neocortex. May regulate the stability and proteasomal degradation of the estrogen receptors that play an important role in neuronal differentiation, survival and plasticity. Axonemal dynein assembly factor required for ciliary motility. This chain is Dynein axonemal assembly factor 4, found in Pan paniscus (Pygmy chimpanzee).